We begin with the raw amino-acid sequence, 180 residues long: ADP-ribosylation factor 4 (180 aa).

Residue glycine 2 is the site of N-myristoyl glycine attachment. GTP-binding positions include 24-31 (GLDAAGKT), 67-71 (DVGGQ), and 126-129 (NKQD). A Phosphoserine modification is found at serine 147.

It belongs to the small GTPase superfamily. Arf family. Forms a complex containing RAB11A, ASAP1, RAB3IP, RAP11FIP3 and ARF4; the complex promotes preciliary trafficking; the complex binds to RHO in photoreceptor cells and promotes RHO ciliary transport.

It is found in the golgi apparatus. The protein localises to the membrane. In terms of biological role, GTP-binding protein that functions as an allosteric activator of the cholera toxin catalytic subunit, an ADP-ribosyltransferase. Involved in protein trafficking; may modulate vesicle budding and uncoating within the Golgi apparatus. Part of the ciliary targeting complex containing Rab11, ASAP1, Rabin8/RAB3IP, RAB11FIP3 and ARF4, which direct preciliary vesicle trafficking to mother centriole and ciliogenesis initiation. In Mus musculus (Mouse), this protein is ADP-ribosylation factor 4 (Arf4).